Reading from the N-terminus, the 245-residue chain is Probable GTP-binding protein EngB (245 aa).

The 178-residue stretch at 46 to 223 folds into the EngB-type G domain; that stretch reads DVPEIAFVGR…AQHLWDWAHP (178 aa). GTP contacts are provided by residues 54 to 61, 81 to 85, 103 to 106, 173 to 176, and 202 to 204; these read GRSNAGKS, GRTQS, DLPG, TKSD, and FSS. The Mg(2+) site is built by Ser-61 and Thr-83. The interval 219–245 is disordered; that stretch reads DWAHPPEKPAKKPKAEPAAEAATGDEG. Residues 222–235 are compositionally biased toward basic and acidic residues; it reads HPPEKPAKKPKAEP. The span at 236–245 shows a compositional bias: low complexity; that stretch reads AAEAATGDEG.

It belongs to the TRAFAC class TrmE-Era-EngA-EngB-Septin-like GTPase superfamily. EngB GTPase family. Mg(2+) is required as a cofactor.

In terms of biological role, necessary for normal cell division and for the maintenance of normal septation. The protein is Probable GTP-binding protein EngB of Polaromonas sp. (strain JS666 / ATCC BAA-500).